Here is a 178-residue protein sequence, read N- to C-terminus: Large ribosomal subunit protein uL6 (178 aa).

Belongs to the universal ribosomal protein uL6 family. Part of the 50S ribosomal subunit.

This protein binds to the 23S rRNA, and is important in its secondary structure. It is located near the subunit interface in the base of the L7/L12 stalk, and near the tRNA binding site of the peptidyltransferase center. The protein is Large ribosomal subunit protein uL6 of Gluconobacter oxydans (strain 621H) (Gluconobacter suboxydans).